The sequence spans 1298 residues: DNA-directed RNA polymerase subunit beta' (1298 aa).

Residues cysteine 60, cysteine 62, cysteine 75, and cysteine 78 each contribute to the Zn(2+) site. The Mg(2+) site is built by aspartate 535, aspartate 537, and aspartate 539. 4 residues coordinate Zn(2+): cysteine 877, cysteine 954, cysteine 961, and cysteine 964.

Belongs to the RNA polymerase beta' chain family. In terms of assembly, the RNAP catalytic core consists of 2 alpha, 1 beta, 1 beta' and 1 omega subunit. When a sigma factor is associated with the core the holoenzyme is formed, which can initiate transcription. The cofactor is Mg(2+). Zn(2+) serves as cofactor.

The catalysed reaction is RNA(n) + a ribonucleoside 5'-triphosphate = RNA(n+1) + diphosphate. DNA-dependent RNA polymerase catalyzes the transcription of DNA into RNA using the four ribonucleoside triphosphates as substrates. The sequence is that of DNA-directed RNA polymerase subunit beta' from Micrococcus luteus (strain ATCC 4698 / DSM 20030 / JCM 1464 / CCM 169 / CCUG 5858 / IAM 1056 / NBRC 3333 / NCIMB 9278 / NCTC 2665 / VKM Ac-2230) (Micrococcus lysodeikticus).